Consider the following 766-residue polypeptide: Lanosterol synthase ERG7 (766 aa).

The disordered stretch occupies residues M1 to T47. A PFTB 1 repeat occupies A148–G190. Residue D482 is the Proton donor of the active site. PFTB repeat units lie at residues I586 to G626 and S635 to T676.

Belongs to the terpene cyclase/mutase family.

It localises to the lipid droplet. The protein localises to the endoplasmic reticulum membrane. It catalyses the reaction (S)-2,3-epoxysqualene = lanosterol. Its pathway is terpene metabolism; lanosterol biosynthesis; lanosterol from farnesyl diphosphate: step 3/3. The protein operates within steroid metabolism; ergosterol biosynthesis. Functionally, lanosterol synthase; part of the third module of ergosterol biosynthesis pathway that includes the late steps of the pathway. ERG7 catalyzes the cyclization of (S)-2,3 oxidosqualene to lanosterol, a reaction that forms the sterol core. The third module or late pathway involves the ergosterol synthesis itself through consecutive reactions that mainly occur in the endoplasmic reticulum (ER) membrane. Firstly, the squalene synthase ERG9 catalyzes the condensation of 2 farnesyl pyrophosphate moieties to form squalene, which is the precursor of all steroids. Squalene synthase is crucial for balancing the incorporation of farnesyl diphosphate (FPP) into sterol and nonsterol isoprene synthesis. Secondly, squalene is converted into lanosterol by the consecutive action of the squalene epoxidase ERG1 and the lanosterol synthase ERG7. Then, the delta(24)-sterol C-methyltransferase ERG6 methylates lanosterol at C-24 to produce eburicol. Eburicol is the substrate of the sterol 14-alpha demethylase encoded by CYP51A, CYP51B and CYP51C, to yield 4,4,24-trimethyl ergosta-8,14,24(28)-trienol. CYP51B encodes the enzyme primarily responsible for sterol 14-alpha-demethylation, and plays an essential role in ascospore formation. CYP51A encodes an additional sterol 14-alpha-demethylase, induced on ergosterol depletion and responsible for the intrinsic variation in azole sensitivity. The third CYP51 isoform, CYP51C, does not encode a sterol 14-alpha-demethylase, but is required for full virulence on host wheat ears. The C-14 reductase ERG24 then reduces the C14=C15 double bond which leads to 4,4-dimethylfecosterol. A sequence of further demethylations at C-4, involving the C-4 demethylation complex containing the C-4 methylsterol oxidases ERG25, the sterol-4-alpha-carboxylate 3-dehydrogenase ERG26 and the 3-keto-steroid reductase ERG27, leads to the production of fecosterol via 4-methylfecosterol. ERG28 has a role as a scaffold to help anchor ERG25, ERG26 and ERG27 to the endoplasmic reticulum. The C-8 sterol isomerase ERG2 then catalyzes the reaction which results in unsaturation at C-7 in the B ring of sterols and thus converts fecosterol to episterol. The sterol-C5-desaturases ERG3A and ERG3BB then catalyze the introduction of a C-5 double bond in the B ring to produce 5-dehydroepisterol. The C-22 sterol desaturases ERG5A and ERG5B further convert 5-dehydroepisterol into ergosta-5,7,22,24(28)-tetraen-3beta-ol by forming the C-22(23) double bond in the sterol side chain. Finally, ergosta-5,7,22,24(28)-tetraen-3beta-ol is substrate of the C-24(28) sterol reductase ERG4 to produce ergosterol. The protein is Lanosterol synthase ERG7 of Gibberella zeae (strain ATCC MYA-4620 / CBS 123657 / FGSC 9075 / NRRL 31084 / PH-1) (Wheat head blight fungus).